Reading from the N-terminus, the 548-residue chain is Pentatricopeptide repeat-containing protein At5g15300 (548 aa).

PPR repeat units follow at residues 76–110 (DVSI…GVSP), 111–145 (DRYT…GFVL), 146–176 (NEYV…SAKA), 177–211 (HKVA…DQVA), 212–238 (WNVM…FTEK), 239–273 (DVVT…GEHP), 274–308 (DVVT…ASVS), 314–348 (GTPI…DLST), 349–378 (WNTL…KVWP), 379–409 (NEVT…MRDM), and 415–445 (NIKH…MKIE). The interval 450–525 (VWRTLLGACK…PTGVSLIEED (76 aa)) is type E motif.

This sequence belongs to the PPR family. PCMP-E subfamily.

The chain is Pentatricopeptide repeat-containing protein At5g15300 (PCMP-E40) from Arabidopsis thaliana (Mouse-ear cress).